A 46-amino-acid polypeptide reads, in one-letter code: Large ribosomal subunit protein bL36 (46 aa).

It belongs to the bacterial ribosomal protein bL36 family.

This Serratia proteamaculans (strain 568) protein is Large ribosomal subunit protein bL36.